A 55-amino-acid chain; its full sequence is uncharacterized protein (55 aa).

This is an uncharacterized protein from Dictyostelium discoideum (Social amoeba).